The primary structure comprises 176 residues: Skp1-related protein (176 aa).

This sequence belongs to the SKP1 family. As to quaternary structure, probable component of the SCF(sel-10) E3 ubiquitin-protein ligase complex containing F-box domain-containing protein sel-10 as the substrate recognition component. Interacts with cul-1. May interact with the F-box protein mec-15. Interacts with dre-1. Interacts with syg-1. Interacts with sel-10. As to expression, ubiquitously expressed in the adult.

Functionally, probable essential component of SCF (SKP1-CUL1-F-box protein) E3 ubiquitin-protein ligase complexes, which mediate the ubiquitination and subsequent proteasomal degradation of target proteins. Regulates cell proliferation during embryonic and larval development. Involved in synapse elimination in early synapse development. May negatively regulate the apoptotic activity of cep-1 in response to genotoxic stress. Plays a role in sex determination. This is Skp1-related protein from Caenorhabditis elegans.